We begin with the raw amino-acid sequence, 50 residues long: Monellin chain B (50 aa).

Heterodimer of an A chain and a B chain.

In terms of biological role, taste-modifying protein; intensely sweet-tasting protein. The chain is Monellin chain B from Dioscoreophyllum cumminsii (Serendipity berry).